The following is a 609-amino-acid chain: Sulfite reductase [NADPH] flavoprotein alpha-component (609 aa).

Positions 72–210 (ITLISASQTG…LAAQWRRQLV (139 aa)) constitute a Flavodoxin-like domain. Residues 78-83 (SQTGNA) and 125-128 (STQG) each bind FMN. An FAD-binding FR-type domain is found at 244 to 458 (SSPLQATFAV…IEHNDNFRLP (215 aa)). Residues Thr332, Gln366, 396–399 (RLYS), 414–416 (TVG), Tyr420, and 429–432 (GGAS) contribute to the FAD site. NADP(+) contacts are provided by residues 529 to 530 (SR), 535 to 539 (KIYVQ), and Asp571. Tyr609 lines the FAD pocket.

The protein belongs to the NADPH-dependent sulphite reductase flavoprotein subunit CysJ family. It in the N-terminal section; belongs to the flavodoxin family. In the C-terminal section; belongs to the flavoprotein pyridine nucleotide cytochrome reductase family. In terms of assembly, alpha(8)-beta(8). The alpha component is a flavoprotein, the beta component is a hemoprotein. It depends on FAD as a cofactor. FMN is required as a cofactor.

The enzyme catalyses hydrogen sulfide + 3 NADP(+) + 3 H2O = sulfite + 3 NADPH + 4 H(+). It participates in sulfur metabolism; hydrogen sulfide biosynthesis; hydrogen sulfide from sulfite (NADPH route): step 1/1. Its function is as follows. Component of the sulfite reductase complex that catalyzes the 6-electron reduction of sulfite to sulfide. This is one of several activities required for the biosynthesis of L-cysteine from sulfate. The flavoprotein component catalyzes the electron flow from NADPH -&gt; FAD -&gt; FMN to the hemoprotein component. The protein is Sulfite reductase [NADPH] flavoprotein alpha-component of Pectobacterium atrosepticum (strain SCRI 1043 / ATCC BAA-672) (Erwinia carotovora subsp. atroseptica).